An 821-amino-acid chain; its full sequence is DNA ligase (821 aa).

NAD(+) contacts are provided by residues 33 to 37 (DVDYD), 82 to 83 (SL), and Glu-113. Lys-115 (N6-AMP-lysine intermediate) is an active-site residue. Residues Arg-136, Glu-173, Lys-290, and Lys-314 each coordinate NAD(+). Zn(2+) is bound by residues Cys-408, Cys-411, Cys-426, and Cys-432. Residues 741-821 (IVAGPLDGQT…RLLAYLAEHE (81 aa)) enclose the BRCT domain.

Belongs to the NAD-dependent DNA ligase family. LigA subfamily. It depends on Mg(2+) as a cofactor. The cofactor is Mn(2+).

It carries out the reaction NAD(+) + (deoxyribonucleotide)n-3'-hydroxyl + 5'-phospho-(deoxyribonucleotide)m = (deoxyribonucleotide)n+m + AMP + beta-nicotinamide D-nucleotide.. DNA ligase that catalyzes the formation of phosphodiester linkages between 5'-phosphoryl and 3'-hydroxyl groups in double-stranded DNA using NAD as a coenzyme and as the energy source for the reaction. It is essential for DNA replication and repair of damaged DNA. This chain is DNA ligase, found in Stenotrophomonas maltophilia (strain K279a).